A 411-amino-acid polypeptide reads, in one-letter code: Lissencephaly-1 homolog (411 aa).

Residues 9-41 (QREELNQAIADYLGSNGYGDSLETFRKEADVST) enclose the LisH domain. The stretch at 56 to 83 (TSVIRLQKKVMELEAKLTEAEKEVIEGA) forms a coiled coil. WD repeat units lie at residues 106-147 (GHRA…RSLK), 148-187 (GHTD…ECVK), 191-230 (GHDH…CVKT), 233-272 (GHRE…CKVE), 275-334 (DHEH…CLLT), 337-376 (GHDN…CMKT), and 379-411 (AHQH…WECR).

It belongs to the WD repeat LIS1/nudF family.

The protein resides in the cytoplasm. It is found in the cytoskeleton. The protein localises to the microtubule organizing center. It localises to the centrosome. Its function is as follows. Positively regulates the activity of the minus-end directed microtubule motor protein dynein. May enhance dynein-mediated microtubule sliding by targeting dynein to the microtubule plus end. Required for several dynein- and microtubule-dependent processes. In Drosophila persimilis (Fruit fly), this protein is Lissencephaly-1 homolog.